The sequence spans 577 residues: MNNTHSSVLNKVAYLILHGFDKSYRWHSRITRDAQQRFEQALWQETQKAVKERIAIYERTLADAVGEIYQQVFPHQENNQFWFDLKTRYQKILSDHPQYELAETFYNSVLGRIFKHQKINDEMMFIMPTRCYLAGLQRHLVVHSFDTSGTVRRMLEDIFSQYHFDIAFQDMQRDLQHLDGALRARLNREQLASVHTVEMLKPVFYRSKSAYLIGRICMPDETLPFVIPLSIAEAETSGEKHKIVVEALLTERQDLSVVFSFARAYFMADTQHPAEVVAFLHELLPHKKKFELYIALGLYKHGKTVFYRNFLAHLEESNDQFSIAPGIRGLVMAVFHLPSYGVVFKIIKDEFPESKKITRQHVKDCYKLVKMTDRVGRMADTHEYVNFRLPRHRVEQALVDELLDCCASSIELTDEEVIIKHLYIERKMTPLNIFLEQQPDPALITSALNDLGLCIKQIAAAHIFAGDMLHKNFGITRGGRVIFYDYDEICYLTEREFRTLPKSDDPYAIDTLSVGPTDVFPEQFEHFIVGKKHLKQELKALHGEIMTAEYWQHMQAQSLKGDVPDFIPYNQAKRFVN.

ATP contacts are provided by residues A324–L330 and K345. The active site involves D380.

It belongs to the AceK family.

The protein resides in the cytoplasm. It catalyses the reaction L-seryl-[isocitrate dehydrogenase] + ATP = O-phospho-L-seryl-[isocitrate dehydrogenase] + ADP + H(+). Functionally, bifunctional enzyme which can phosphorylate or dephosphorylate isocitrate dehydrogenase (IDH) on a specific serine residue. This is a regulatory mechanism which enables bacteria to bypass the Krebs cycle via the glyoxylate shunt in response to the source of carbon. When bacteria are grown on glucose, IDH is fully active and unphosphorylated, but when grown on acetate or ethanol, the activity of IDH declines drastically concomitant with its phosphorylation. In Pseudoalteromonas atlantica (strain T6c / ATCC BAA-1087), this protein is Isocitrate dehydrogenase kinase/phosphatase.